We begin with the raw amino-acid sequence, 303 residues long: Methionyl-tRNA formyltransferase (303 aa).

111–114 (SLLP) contacts (6S)-5,6,7,8-tetrahydrofolate.

The protein belongs to the Fmt family.

The enzyme catalyses L-methionyl-tRNA(fMet) + (6R)-10-formyltetrahydrofolate = N-formyl-L-methionyl-tRNA(fMet) + (6S)-5,6,7,8-tetrahydrofolate + H(+). Attaches a formyl group to the free amino group of methionyl-tRNA(fMet). The formyl group appears to play a dual role in the initiator identity of N-formylmethionyl-tRNA by promoting its recognition by IF2 and preventing the misappropriation of this tRNA by the elongation apparatus. In Ehrlichia canis (strain Jake), this protein is Methionyl-tRNA formyltransferase.